Reading from the N-terminus, the 185-residue chain is NAD(P)H-quinone oxidoreductase subunit J (185 aa).

Belongs to the complex I 30 kDa subunit family. In terms of assembly, NDH-1 can be composed of about 15 different subunits; different subcomplexes with different compositions have been identified which probably have different functions.

It localises to the cellular thylakoid membrane. The enzyme catalyses a plastoquinone + NADH + (n+1) H(+)(in) = a plastoquinol + NAD(+) + n H(+)(out). It catalyses the reaction a plastoquinone + NADPH + (n+1) H(+)(in) = a plastoquinol + NADP(+) + n H(+)(out). Functionally, NDH-1 shuttles electrons from an unknown electron donor, via FMN and iron-sulfur (Fe-S) centers, to quinones in the respiratory and/or the photosynthetic chain. The immediate electron acceptor for the enzyme in this species is believed to be plastoquinone. Couples the redox reaction to proton translocation, and thus conserves the redox energy in a proton gradient. Cyanobacterial NDH-1 also plays a role in inorganic carbon-concentration. In Prochlorococcus marinus (strain MIT 9303), this protein is NAD(P)H-quinone oxidoreductase subunit J.